A 472-amino-acid polypeptide reads, in one-letter code: 2-oxoisovalerate dehydrogenase subunit alpha 2, mitochondrial (472 aa).

185–187 (QYR) lines the thiamine diphosphate pocket. Positions 234, 239, and 240 each coordinate K(+).

This sequence belongs to the BCKDHA family. Heterotetramer of alpha and beta chains. Thiamine diphosphate is required as a cofactor.

It is found in the mitochondrion matrix. The catalysed reaction is N(6)-[(R)-lipoyl]-L-lysyl-[protein] + 3-methyl-2-oxobutanoate + H(+) = N(6)-[(R)-S(8)-2-methylpropanoyldihydrolipoyl]-L-lysyl-[protein] + CO2. Functionally, the branched-chain alpha-keto dehydrogenase complex catalyzes the overall conversion of alpha-keto acids to acyl-CoA and CO(2). It contains multiple copies of three enzymatic components: branched-chain alpha-keto acid decarboxylase (E1), lipoamide acyltransferase (E2) and lipoamide dehydrogenase (E3). The protein is 2-oxoisovalerate dehydrogenase subunit alpha 2, mitochondrial of Arabidopsis thaliana (Mouse-ear cress).